The sequence spans 708 residues: Homeobox-leucine zipper protein HDG10 (708 aa).

The tract at residues 1–24 is disordered; that stretch reads MDSSHNDSSSDEEGIDSNNRRHHS. Positions 16-75 form a DNA-binding region, homeobox; the sequence is DSNNRRHHSNHQVQRLEAFFHECPHPDDSQRRQLGNELNLKHKQIKFWFQNRRTQARIHN. Residues 119–141 adopt a coiled-coil conformation; the sequence is LCNLQKLRTKNVILKTEYERLSS. Residues 162–188 are disordered; it reads GPSTYGSTSNNRPASYGSSSNHLPQQS. The span at 165–188 shows a compositional bias: polar residues; sequence TYGSTSNNRPASYGSSSNHLPQQS. The 239-residue stretch at 218–456 folds into the START domain; that stretch reads SQLEKNRMFE…LQRMCERLSL (239 aa).

Belongs to the HD-ZIP homeobox family. Class IV subfamily. As to quaternary structure, interacts with ANT, BBM and AIL1. Expressed in exclusively in anthers with highest levels in the tapetum and pollen grains.

The protein localises to the nucleus. Probable transcription factor. This chain is Homeobox-leucine zipper protein HDG10, found in Arabidopsis thaliana (Mouse-ear cress).